Here is a 177-residue protein sequence, read N- to C-terminus: Flavodoxin (177 aa).

Residues 4–173 form the Flavodoxin-like domain; that stretch reads IGIFFGSDTG…RIDTWLDKLK (170 aa).

Belongs to the flavodoxin family. The cofactor is FMN.

Functionally, low-potential electron donor to a number of redox enzymes. NifF is the electron donor to nitrogenase. This is Flavodoxin (nifF) from Enterobacter agglomerans (Erwinia herbicola).